A 498-amino-acid polypeptide reads, in one-letter code: Delta(14)-sterol reductase erg24A (498 aa).

The next 4 membrane-spanning stretches (helical) occupy residues 30-50 (LGAF…TFLC), 91-111 (VTVW…FLPG), 136-156 (ILIL…FVVW), and 163-183 (YVQI…FVYA). N-linked (GlcNAc...) asparagine glycosylation is present at Asn-257. 3 helical membrane-spanning segments follow: residues 275-295 (IVLS…MEPA), 302-322 (VIMD…VPFI), and 339-359 (LREI…FRGA). Residues Lys-363, Arg-367, Trp-395, and 402 to 403 (NY) contribute to the NADP(+) site. Asn-429 carries N-linked (GlcNAc...) asparagine glycosylation. The chain crosses the membrane as a helical span at residues 444 to 464 (VRGWGMIFTYFFLVYFGALLI). NADP(+) is bound by residues Asp-470, 474 to 478 (CKSKY), and Tyr-485.

It belongs to the ERG4/ERG24 family.

The protein localises to the endoplasmic reticulum membrane. The protein operates within steroid metabolism; ergosterol biosynthesis. Delta(14)-sterol reductase; part of the third module of ergosterol biosynthesis pathway that includes the late steps of the pathway. Catalyzes the reduction of the C14=C15 double bond within 4,4,24-trimethyl ergosta-8,14,24(28)-trienolto produce 4,4-dimethylfecosterol. The third module or late pathway involves the ergosterol synthesis itself through consecutive reactions that mainly occur in the endoplasmic reticulum (ER) membrane. Firstly, the squalene synthase erg9 catalyzes the condensation of 2 farnesyl pyrophosphate moieties to form squalene, which is the precursor of all steroids. Squalene synthase is crucial for balancing the incorporation of farnesyl diphosphate (FPP) into sterol and nonsterol isoprene synthesis. Secondly, squalene is converted into lanosterol by the consecutive action of the squalene epoxidase erg1 and the lanosterol synthase erg7. Then, the delta(24)-sterol C-methyltransferase erg6 methylates lanosterol at C-24 to produce eburicol. Eburicol is the substrate of the sterol 14-alpha demethylase encoded by cyp51A and cyp51B, to yield 4,4,24-trimethyl ergosta-8,14,24(28)-trienol. The C-14 reductase erg24 then reduces the C14=C15 double bond which leads to 4,4-dimethylfecosterol. A sequence of further demethylations at C-4, involving the C-4 demethylation complex containing the C-4 methylsterol oxidases erg25A or erg25B, the sterol-4-alpha-carboxylate 3-dehydrogenase erg26 and the 3-keto-steroid reductase erg27, leads to the production of fecosterol via 4-methylfecosterol. The C-8 sterol isomerase erg2 then catalyzes the reaction which results in unsaturation at C-7 in the B ring of sterols and thus converts fecosterol to episterol. The sterol-C5-desaturase erg3B then catalyzes the introduction of a C-5 double bond in the B ring to produce 5-dehydroepisterol. The 2 other sterol-C5-desaturases, erg3A and erg3C, seem to be less important in ergosterol biosynthesis. The C-22 sterol desaturase erg5 further converts 5-dehydroepisterol into ergosta-5,7,22,24(28)-tetraen-3beta-ol by forming the C-22(23) double bond in the sterol side chain. Finally, ergosta-5,7,22,24(28)-tetraen-3beta-ol is substrate of the C-24(28) sterol reductases erg4A and erg4B to produce ergosterol. Possible alternative sterol biosynthetic pathways might exist from fecosterol to ergosterol, depending on the activities of the erg3 isoforms. The polypeptide is Delta(14)-sterol reductase erg24A (Aspergillus fumigatus (strain ATCC MYA-4609 / CBS 101355 / FGSC A1100 / Af293) (Neosartorya fumigata)).